Here is a 569-residue protein sequence, read N- to C-terminus: MRICGIKLTHDGAIAVVEDGRRLFCVEQEKRGNGPRYQSVDNLDAVVFALAEHGLNPRDIDQFVIDGWDGENESQFQLLSGAVPVALKGAPYVERHAEGLLDSVDGYGLLLGGEEFPYKSYPHVTGHVASAYSTSPFASAGKPALCLVWDGCIFPRLYYVEPQGARLIGSLFPMIGHAYAAAGLHFGPYRQPNRSSWDLGIAGKLMAYIELGSVDESIVEVFQGLYETRSAADTEQARRYRENINNAEASLAVIHDFFESSALRLKAKRAEDVLASFHVFLERLLVKEIAMVLLRHSSLPGARNLCIAGGCGLNIKWNSALRATGLFDDVWVPPFPNDSGSAIGAACGAMAAQDGFEPLEWSVYSGPALQESEVPPDWEAAPCSLPELASILADNKPVIFLSGCAGLGPRALGGRSILAAPTSPEMKDHLNDIKRREHFRPVVPICLEDRAPEIFSPGTPDPYMLFDHQTRANWRDKIPAVVHLDGSARLQTISRNSPHKIAALLIEFEQLTGIPLLCTTSANLHGRGFFPDAAAACQWGRVEHVWCEGMLWSKTVIKKSSPTERLLSA.

The protein belongs to the NodU/CmcH family.

In terms of biological role, involved in 6-O-carbamoylation of Nod-factors. The chain is Nodulation protein U (nodU) from Bradyrhizobium diazoefficiens (strain JCM 10833 / BCRC 13528 / IAM 13628 / NBRC 14792 / USDA 110).